The following is a 263-amino-acid chain: Small ribosomal subunit protein uS2 (263 aa).

The residue at position 2 (serine 2) is an N-acetylserine. Acidic residues predominate over residues 211–242; that stretch reads EQTAEEEAEAAEGAEFEVEEEEVEQEWQEPAE. The segment at 211–263 is disordered; it reads EQTAEEEAEAAEGAEFEVEEEEVEQEWQEPAEADWNASAPPADWNDAANAEAF. Positions 246 to 263 are enriched in low complexity; that stretch reads NASAPPADWNDAANAEAF.

This sequence belongs to the universal ribosomal protein uS2 family. In terms of assembly, component of the small ribosomal subunit. Mature ribosomes consist of a small (40S) and a large (60S) subunit. The 40S subunit contains about 33 different proteins and 1 molecule of RNA (18S). The 60S subunit contains about 49 different proteins and 3 molecules of RNA (25S, 5.8S and 5S). Interacts with RPS21.

It localises to the cytoplasm. Required for the assembly and/or stability of the 40S ribosomal subunit. Required for the processing of the 20S rRNA-precursor to mature 18S rRNA in a late step of the maturation of 40S ribosomal subunits. The polypeptide is Small ribosomal subunit protein uS2 (Komagataella phaffii (strain GS115 / ATCC 20864) (Yeast)).